We begin with the raw amino-acid sequence, 170 residues long: Macro domain-containing protein DR_2288 (170 aa).

The 170-residue stretch at 1 to 170 (MPLELVQGDI…HVFERALAQL (170 aa)) folds into the Macro domain.

This sequence belongs to the MacroD-type family.

In Deinococcus radiodurans (strain ATCC 13939 / DSM 20539 / JCM 16871 / CCUG 27074 / LMG 4051 / NBRC 15346 / NCIMB 9279 / VKM B-1422 / R1), this protein is Macro domain-containing protein DR_2288.